The primary structure comprises 29 residues: Small toxic protein ZorO (29 aa).

A helical membrane pass occupies residues 10–27 (VLIAVLELLVALLRLIDL).

It is found in the cell inner membrane. Its function is as follows. Toxic component of a type I toxin-antitoxin (TA) system. Expression in the absence of its cognate antitoxin (small sRNA orzO) leads to cell stasis and a decrease in colony-forming units. Repression of ZorO toxicity requires base pairing between zorO mRNA and sRNA OrzO, as well as RNase III (rnc), suggesting the mRNA is degraded. Base pairing occurs between 18 bases in the 5' UTR of zorO mRNA and the 5' end of OrzO sRNA. sRNA OrzP, which differs only in 4 of these 18 bases, does not repress ZorO toxicity. Integration of the protein into the inner membrane damages membrane integrity and affects membrane potential. It leads to increased levels of hydroxyl radicals. In Escherichia coli O157:H7, this protein is Small toxic protein ZorO.